We begin with the raw amino-acid sequence, 141 residues long: Large ribosomal subunit protein uL11 (141 aa).

It belongs to the universal ribosomal protein uL11 family. As to quaternary structure, part of the ribosomal stalk of the 50S ribosomal subunit. Interacts with L10 and the large rRNA to form the base of the stalk. L10 forms an elongated spine to which L12 dimers bind in a sequential fashion forming a multimeric L10(L12)X complex. Post-translationally, one or more lysine residues are methylated.

Its function is as follows. Forms part of the ribosomal stalk which helps the ribosome interact with GTP-bound translation factors. The protein is Large ribosomal subunit protein uL11 of Exiguobacterium sibiricum (strain DSM 17290 / CCUG 55495 / CIP 109462 / JCM 13490 / 255-15).